The primary structure comprises 75 residues: MARDMFKRRRYCRFSAEGIKQVDYKDVDLLKDFINENGKIIPARITGTKAKYQRQLTTAVKRARFLALLPYTDKH.

Belongs to the bacterial ribosomal protein bS18 family. In terms of assembly, part of the 30S ribosomal subunit. Forms a tight heterodimer with protein bS6.

Its function is as follows. Binds as a heterodimer with protein bS6 to the central domain of the 16S rRNA, where it helps stabilize the platform of the 30S subunit. The sequence is that of Small ribosomal subunit protein bS18 from Methylobacillus flagellatus (strain ATCC 51484 / DSM 6875 / VKM B-1610 / KT).